A 754-amino-acid chain; its full sequence is Bifunctional sesterterpene synthase astC (754 aa).

Positions methionine 1 to serine 24 are cleaved as a signal peptide. The tract at residues isoleucine 58–tryptophan 388 is sesterterpene synthase. Residues aspartate 149 and aspartate 153 each contribute to the Mg(2+) site. Residues arginine 389–valine 753 are geranylfarnesyl diphosphate synthase. The segment covering glutamate 392–aspartate 403 has biased composition (basic and acidic residues). Residues glutamate 392–serine 414 are disordered. 2 residues coordinate Mg(2+): aspartate 512 and aspartate 516.

The protein in the N-terminal section; belongs to the terpene synthase family. In the C-terminal section; belongs to the FPP/GGPP synthase family. The cofactor is Mg(2+).

The enzyme catalyses (2E,6E,10E,14E)-geranylfarnesyl diphosphate = preasperterpenoid A + diphosphate. Its pathway is secondary metabolite biosynthesis; terpenoid biosynthesis. In terms of biological role, bifunctional sesterterpene synthase; part of the gene cluster that mediates the biosynthesis of the asperterpenoids, sesterterpenes that exhibit anti-tuberculosis activity. The first step of the pathway is performed by the sesterterpene synthase astC that possesses both prenyl transferase and terpene cyclase activity, converting isopentenyl diphosphate and dimethylallyl diphosphate into geranylfarnesyl diphosphate (GFPP) and further converting GFPP into preasperterpenoid A, respectively. The cytochrome P450 monooxygenase astB then dually oxidizes preasperterpenoid A to produce asperterpenoid A along with a minor product, asperterpenoid B. Finally, the cytochrome P450 monooxygenase astA converts asperterpenoid A into asperterpenoid C. The protein is Bifunctional sesterterpene synthase astC of Talaromyces wortmannii (Penicillium wortmannii).